Reading from the N-terminus, the 434-residue chain is Eukaryotic translation initiation factor 3 subunit E-2 (434 aa).

The 174-residue stretch at 219-392 (FFNHPKGRDL…GHVVMGTQPL (174 aa)) folds into the PCI domain.

It belongs to the eIF-3 subunit E family. As to quaternary structure, component of the eukaryotic translation initiation factor 3 (eIF-3) complex. The eIF-3 complex interacts with pix. Interacts with mxt.

It localises to the cytoplasm. In terms of biological role, component of the eukaryotic translation initiation factor 3 (eIF-3) complex, which is involved in protein synthesis of a specialized repertoire of mRNAs and, together with other initiation factors, stimulates binding of mRNA and methionyl-tRNAi to the 40S ribosome. The eIF-3 complex specifically targets and initiates translation of a subset of mRNAs involved in cell proliferation. This is Eukaryotic translation initiation factor 3 subunit E-2 (eIF3-S6-2) from Drosophila willistoni (Fruit fly).